Consider the following 746-residue polypeptide: UvrABC system protein C (746 aa).

In terms of domain architecture, GIY-YIG spans 18-97 (AKPGVYKWRD…IKEFDPRFNV (80 aa)). Residues 211–246 (RPYIAQLTRDMKEASAELEFEKAARLRDQIQMLETV) form the UVR domain. The interval 557–577 (ANGNDNGEGGSDISGKGHAVP) is disordered.

This sequence belongs to the UvrC family. In terms of assembly, interacts with UvrB in an incision complex.

It localises to the cytoplasm. Its function is as follows. The UvrABC repair system catalyzes the recognition and processing of DNA lesions. UvrC both incises the 5' and 3' sides of the lesion. The N-terminal half is responsible for the 3' incision and the C-terminal half is responsible for the 5' incision. This Bifidobacterium longum (strain NCC 2705) protein is UvrABC system protein C.